Reading from the N-terminus, the 62-residue chain is MFPMKKSLLLLFFFGPISLSFCDQERGADEEENGGEVTEQEVKRNILSSIVNGINRALSFFG.

The first 22 residues, 1-22 (MFPMKKSLLLLFFFGPISLSFC), serve as a signal peptide directing secretion. Residues 23–44 (DQERGADEEENGGEVTEQEVKR) constitute a propeptide that is removed on maturation.

As to expression, expressed by the skin glands.

It is found in the secreted. In terms of biological role, antimicrobial peptide with activity against Gram-positive bacteria. Has been tested against S.aureus (MIC=37.5 ug/mL), against B.pumilus (MIC=75.0 ug/mL), B.cereus (no activity detected). Does not show activity against Gram-negative bacteria (E.coli, B.dysenteriae, A.calcoaceticus, P.aeruginosa) and fungi (C.albicans). Does not show hemolytic activity against rabbit erythrocytes. In Amolops loloensis (Lolokou Sucker Frog), this protein is Amolopin-P1.